The chain runs to 811 residues: LPS-assembly protein LptD (811 aa).

The first 17 residues, 1-17, serve as a signal peptide directing secretion; sequence MTEPNRARKTRQRTAFA. The tract at residues 1–22 is disordered; that stretch reads MTEPNRARKTRQRTAFAAPDQR.

Belongs to the LptD family. In terms of assembly, component of the lipopolysaccharide transport and assembly complex. Interacts with LptE and LptA.

It localises to the cell outer membrane. Together with LptE, is involved in the assembly of lipopolysaccharide (LPS) at the surface of the outer membrane. This chain is LPS-assembly protein LptD, found in Ralstonia nicotianae (strain ATCC BAA-1114 / GMI1000) (Ralstonia solanacearum).